We begin with the raw amino-acid sequence, 418 residues long: Tyrosine--tRNA ligase (418 aa).

Y34 is a binding site for L-tyrosine. Positions 39–48 match the 'HIGH' region motif; it reads PTADSLHLGH. The L-tyrosine site is built by Y169 and Q173. Positions 229–233 match the 'KMSKS' region motif; it reads KFGKS. K232 lines the ATP pocket. The region spanning 352-418 is the S4 RNA-binding domain; sequence HNIVEILVAA…GKKKYAVLTY (67 aa).

Belongs to the class-I aminoacyl-tRNA synthetase family. TyrS type 1 subfamily. In terms of assembly, homodimer.

The protein resides in the cytoplasm. The catalysed reaction is tRNA(Tyr) + L-tyrosine + ATP = L-tyrosyl-tRNA(Tyr) + AMP + diphosphate + H(+). Its function is as follows. Catalyzes the attachment of tyrosine to tRNA(Tyr) in a two-step reaction: tyrosine is first activated by ATP to form Tyr-AMP and then transferred to the acceptor end of tRNA(Tyr). This chain is Tyrosine--tRNA ligase, found in Streptococcus pyogenes serotype M49 (strain NZ131).